Consider the following 164-residue polypeptide: MRGASAASKIFFFSIFVVIVISRFLFFLIFSERQTFRNTCPENYPGLHVIICYPVGRRLFFPFLSLVSFSNLPPCSILLCCYNHNKTKNPYGHTYIYIYIYIFCYACIFLLQAACLIGNFKAAKLYIKKNIHLSRYEVFCWCRPVMVLPAARLLCFRPTRGCGP.

This is an uncharacterized protein from Saccharomyces cerevisiae (strain ATCC 204508 / S288c) (Baker's yeast).